We begin with the raw amino-acid sequence, 308 residues long: Glycine--tRNA ligase alpha subunit (308 aa).

This sequence belongs to the class-II aminoacyl-tRNA synthetase family. Tetramer of two alpha and two beta subunits.

The protein localises to the cytoplasm. The catalysed reaction is tRNA(Gly) + glycine + ATP = glycyl-tRNA(Gly) + AMP + diphosphate. The polypeptide is Glycine--tRNA ligase alpha subunit (Streptococcus pyogenes serotype M3 (strain SSI-1)).